Reading from the N-terminus, the 275-residue chain is 2,3,4,5-tetrahydropyridine-2,6-dicarboxylate N-succinyltransferase (275 aa).

The substrate site is built by Arg-107 and Asp-144.

The protein belongs to the transferase hexapeptide repeat family. Homotrimer.

It localises to the cytoplasm. It catalyses the reaction (S)-2,3,4,5-tetrahydrodipicolinate + succinyl-CoA + H2O = (S)-2-succinylamino-6-oxoheptanedioate + CoA. It functions in the pathway amino-acid biosynthesis; L-lysine biosynthesis via DAP pathway; LL-2,6-diaminopimelate from (S)-tetrahydrodipicolinate (succinylase route): step 1/3. The protein is 2,3,4,5-tetrahydropyridine-2,6-dicarboxylate N-succinyltransferase of Polynucleobacter asymbioticus (strain DSM 18221 / CIP 109841 / QLW-P1DMWA-1) (Polynucleobacter necessarius subsp. asymbioticus).